The primary structure comprises 327 residues: Eukaryotic translation initiation factor 3 subunit I (327 aa).

5 WD repeats span residues 8–49, 51–89, 188–227, 229–268, and 285–324; these read GHER…GSYD, HNGA…CLYT, VHRY…KLKQ, KSER…GHFE, and GHFG…LGFT.

It belongs to the eIF-3 subunit I family. Component of the eukaryotic translation initiation factor 3 (eIF-3) complex.

It is found in the cytoplasm. In terms of biological role, component of the eukaryotic translation initiation factor 3 (eIF-3) complex, which is involved in protein synthesis of a specialized repertoire of mRNAs and, together with other initiation factors, stimulates binding of mRNA and methionyl-tRNAi to the 40S ribosome. The eIF-3 complex specifically targets and initiates translation of a subset of mRNAs involved in cell proliferation. The protein is Eukaryotic translation initiation factor 3 subunit I of Caenorhabditis elegans.